The sequence spans 266 residues: UPF0294 protein YafD (266 aa).

The protein belongs to the UPF0294 family.

The protein resides in the cytoplasm. This chain is UPF0294 protein YafD, found in Shigella dysenteriae serotype 1 (strain Sd197).